Consider the following 292-residue polypeptide: 33 kDa chaperonin (292 aa).

2 cysteine pairs are disulfide-bonded: C230/C232 and C263/C266.

This sequence belongs to the HSP33 family. Post-translationally, under oxidizing conditions two disulfide bonds are formed involving the reactive cysteines. Under reducing conditions zinc is bound to the reactive cysteines and the protein is inactive.

The protein localises to the cytoplasm. In terms of biological role, redox regulated molecular chaperone. Protects both thermally unfolding and oxidatively damaged proteins from irreversible aggregation. Plays an important role in the bacterial defense system toward oxidative stress. In Sodalis glossinidius (strain morsitans), this protein is 33 kDa chaperonin.